Reading from the N-terminus, the 680-residue chain is Calcium-binding and coiled-coil domain-containing protein 1 (680 aa).

Positions 1 to 30 (MEESSLSRAPSRGGVNFLNVARTYIPNTKV) are p300 KIX-binding. Residues 1–190 (MEESSLSRAP…VQELEKALAA (190 aa)) form an N-terminal AD (CTNNB1 binding site) region. At Ser-4 the chain carries Phosphoserine. The tract at residues 45-125 (SDWIGIFKVE…FQFREPRPMD (81 aa)) is interaction with GATA1. Coiled coils occupy residues 145–205 (KATV…YKGL), 232–339 (ELEE…AELE), and 417–514 (QSVE…ADEK). Residues 501–680 (RKLEARLEKV…HTYTHTHTHA (180 aa)) form a C-terminal AD (CTNNB1 binding site); interaction with CCAR1 region. The disordered stretch occupies residues 511–606 (ADEKWSEDPA…DSEAEDEKSV (96 aa)). Residues 654 to 679 (WKECPICKERFPVHTQTHTYTHTHTH) form a UBZ1-type zinc finger. The Zn(2+) site is built by Cys-657, Cys-660, His-675, and His-679.

This sequence belongs to the CALCOCO family. As to quaternary structure, part of a calphoglin complex consisting of CALCOCO1, PPA1 and PGM. Interacts with the bHLH-PAS domains of GRIP1, AHR and ARNT. Interacts with CTNNB1 via both its N- and C-terminal regions. Interacts with EP300. Interacts with CCAR1 (via N-terminus) and GATA1.

It is found in the cytoplasm. The protein resides in the nucleus. Functionally, functions as a coactivator for aryl hydrocarbon and nuclear receptors (NR). Recruited to promoters through its contact with the N-terminal basic helix-loop-helix-Per-Arnt-Sim (PAS) domain of transcription factors or coactivators, such as NCOA2. During ER-activation acts synergistically in combination with other NCOA2-binding proteins, such as EP300, CREBBP and CARM1. Involved in the transcriptional activation of target genes in the Wnt/CTNNB1 pathway. Functions as a secondary coactivator in LEF1-mediated transcriptional activation via its interaction with CTNNB1. Coactivator function for nuclear receptors and LEF1/CTNNB1 involves differential utilization of two different activation regions. In association with CCAR1 enhances GATA1- and MED1-mediated transcriptional activation from the gamma-globin promoter during erythroid differentiation of K562 erythroleukemia cells. In terms of biological role, seems to enhance inorganic pyrophosphatase thus activating phosphogluomutase (PMG). Probably functions as a component of the calphoglin complex, which is involved in linking cellular metabolism (phosphate and glucose metabolism) with other core functions including protein synthesis and degradation, calcium signaling and cell growth. The chain is Calcium-binding and coiled-coil domain-containing protein 1 (CALCOCO1) from Bos taurus (Bovine).